Here is a 232-residue protein sequence, read N- to C-terminus: Aspartate racemase (232 aa).

49-51 (DRT) is a substrate binding site. C84 (proton donor/acceptor) is an active-site residue. Residues 85–87 (NTA) and K166 each bind substrate. The active-site Proton donor/acceptor is C195.

It belongs to the aspartate/glutamate racemases family.

The enzyme catalyses L-aspartate = D-aspartate. This is Aspartate racemase from Thermococcus sp. (strain KS-8).